The chain runs to 229 residues: LexA repressor (229 aa).

Positions 28-48 (IREIGEALDIRSTNGVNDHLK) form a DNA-binding region, H-T-H motif. Catalysis depends on for autocatalytic cleavage activity residues Ser-147 and Lys-184.

This sequence belongs to the peptidase S24 family. Homodimer.

It catalyses the reaction Hydrolysis of Ala-|-Gly bond in repressor LexA.. In terms of biological role, represses a number of genes involved in the response to DNA damage (SOS response), including recA and lexA. In the presence of single-stranded DNA, RecA interacts with LexA causing an autocatalytic cleavage which disrupts the DNA-binding part of LexA, leading to derepression of the SOS regulon and eventually DNA repair. The protein is LexA repressor of Anaeromyxobacter dehalogenans (strain 2CP-C).